The chain runs to 197 residues: UPF0301 protein BAV3012 (197 aa).

It belongs to the UPF0301 (AlgH) family.

The sequence is that of UPF0301 protein BAV3012 from Bordetella avium (strain 197N).